The primary structure comprises 278 residues: DNA oxidative demethylase ALKBH2 (278 aa).

Residues 1-49 (MDRFLVKGAVGSLKRRMEQEQTGGGPAGLAEEEGNSKKNPRRAAPGNGV) are disordered. A PCNA-binding motif is present at residues 3-7 (RFLVK). Residues 101–103 (FGK) and 121–123 (YTF) each bind substrate. Residues 151 to 256 (TFNFVLINRY…RVNLTFRKIL (106 aa)) form the Fe2OG dioxygenase domain. The 2-oxoglutarate site is built by N158, Y160, and H170. Fe cation-binding residues include H170 and D172. A substrate-binding site is contributed by D173. 2-oxoglutarate-binding residues include H235, R247, T251, and R253. Residue H235 participates in Fe cation binding.

This sequence belongs to the alkB family. As to quaternary structure, interacts with PCNA homotrimer; this interaction is enhanced during the S-phase of the cell cycle. Interacts with nucleolar proteins NCL, UBTF and NPM1. Interacts with XRCC5-XRCC6 heterodimer. The cofactor is Fe(2+).

It localises to the nucleus. Its subcellular location is the nucleolus. The protein resides in the nucleoplasm. It carries out the reaction a methylated nucleobase within DNA + 2-oxoglutarate + O2 = a nucleobase within DNA + formaldehyde + succinate + CO2. The catalysed reaction is an N(1)-methyl-2'-deoxyadenosine in double-stranded DNA + 2-oxoglutarate + O2 = a 2'-deoxyadenosine in double-stranded DNA + formaldehyde + succinate + CO2 + H(+). The enzyme catalyses an N(1)-methyl-2'-deoxyadenosine in single-stranded DNA + 2-oxoglutarate + O2 = a 2'-deoxyadenosine in single-stranded DNA + formaldehyde + succinate + CO2 + H(+). It catalyses the reaction an N(3)-methyl-2'-deoxycytidine in double-stranded DNA + 2-oxoglutarate + O2 = a 2'-deoxycytidine in double-stranded DNA + formaldehyde + succinate + CO2 + H(+). It carries out the reaction an N(3)-methyl-2'-deoxycytidine in single-stranded DNA + 2-oxoglutarate + O2 = a 2'-deoxycytidine in single-stranded DNA + formaldehyde + succinate + CO2 + H(+). The catalysed reaction is a 1,N(6)-etheno-2'-deoxyadenosine in double-stranded DNA + 2-oxoglutarate + O2 + H2O = a 2'-deoxyadenosine in double-stranded DNA + glyoxal + succinate + CO2. The enzyme catalyses a 1,N(6)-etheno-2'-deoxyadenosine in single-stranded DNA + 2-oxoglutarate + O2 + H2O = a 2'-deoxyadenosine in single-stranded DNA + glyoxal + succinate + CO2. It catalyses the reaction a 3,N(4)-etheno-2'-deoxycytidine in double-stranded DNA + 2-oxoglutarate + O2 + H2O = a 2'-deoxycytidine in double-stranded DNA + glyoxal + succinate + CO2. It carries out the reaction a 3,N(4)-etheno-2'-deoxycytidine in single-stranded DNA + 2-oxoglutarate + O2 + H2O = a 2'-deoxycytidine in single-stranded DNA + glyoxal + succinate + CO2. The catalysed reaction is a 1,N(2)-etheno-2'-deoxyguanosine in double-stranded DNA + 2-oxoglutarate + O2 + H2O = a 2'-deoxyguanosine in double-stranded DNA + glyoxal + succinate + CO2. With respect to regulation, activated by ascorbate and magnesium ions. In terms of biological role, dioxygenase that repairs alkylated nucleic acid bases by direct reversal oxidative dealkylation. Can process both double-stranded (ds) and single-stranded (ss) DNA substrates, with a strong preference for dsDNA. Uses molecular oxygen, 2-oxoglutarate and iron as cofactors to oxidize the alkyl groups that are subsequently released as aldehydes, regenerating the undamaged bases. Probes the base pair stability, locates a weakened base pair and flips the damaged base to accommodate the lesion in its active site for efficient catalysis. Repairs monoalkylated bases, specifically N1-methyladenine and N3-methylcytosine, as well as higher order alkyl adducts such as bases modified with exocyclic bridged adducts known as etheno adducts including 1,N6-ethenoadenine, 3,N4-ethenocytosine and 1,N2-ethenoguanine. Acts as a gatekeeper of genomic integrity under alkylation stress. Efficiently repairs alkylated lesions in ribosomal DNA (rDNA). These lesions can cause ss- and dsDNA strand breaks that severely impair rDNA transcription. In a response mechanism to DNA damage, associates with PCNA at replication forks to repair alkylated adducts prior to replication. The polypeptide is DNA oxidative demethylase ALKBH2 (ALKBH2) (Bos taurus (Bovine)).